Consider the following 331-residue polypeptide: Carbonic anhydrase-related protein 11 (331 aa).

An N-terminal signal peptide occupies residues 1-23; the sequence is MGGAARLSAPRALVLWAVLGAAA. Residues 33–306 form the Alpha-carbonic anhydrase domain; the sequence is DWWSYKDNLQ…LAHRALRGNR (274 aa). N-linked (GlcNAc...) asparagine glycosylation is found at N118, N170, N189, and N263. The tract at residues 303–331 is disordered; that stretch reads RGNRDPRHPERRCRGPNYRLHVDGAPHGR. Basic and acidic residues predominate over residues 322-331; the sequence is LHVDGAPHGR.

Belongs to the alpha-carbonic anhydrase family.

It localises to the secreted. Does not have a catalytic activity. The sequence is that of Carbonic anhydrase-related protein 11 (CA11) from Sus scrofa (Pig).